The chain runs to 417 residues: Gelsolin (417 aa).

Residues 93 to 171 (KVPVLESHYG…VVQGKEPAHL (79 aa)) form a Gelsolin-like 4 repeat. Positions 107, 108, 138, 150, 155, 157, 187, 227, 228, 250, 331, 332, and 354 each coordinate Ca(2+). 2 Gelsolin-like repeats span residues 213–261 (RAVE…LKIL) and 316–392 (IEEV…PTFI).

The protein belongs to the villin/gelsolin family.

It localises to the cytoplasm. It is found in the cytoskeleton. In terms of biological role, calcium-regulated, actin-modulating protein that binds to the plus (or barbed) ends of actin monomers or filaments, preventing monomer exchange (end-blocking or capping). It can promote the assembly of monomers into filaments (nucleation) as well as sever filaments already formed. Plays a role in ciliogenesis. This chain is Gelsolin (gsn), found in Xenopus laevis (African clawed frog).